Consider the following 620-residue polypeptide: MAU2 chromatid cohesion factor homolog (620 aa).

TPR repeat units follow at residues Gly452–Glu485 and Ser492–Ile525.

The protein belongs to the SCC4/mau-2 family. In terms of assembly, interacts with Nipped-B to form the cohesin loading complex.

The protein localises to the nucleus. The protein resides in the nucleoplasm. Its function is as follows. Required for association of the cohesin complex with chromatin during interphase. Plays a role in sister chromatid cohesion and normal progression through prometaphase. The chain is MAU2 chromatid cohesion factor homolog from Drosophila persimilis (Fruit fly).